The sequence spans 204 residues: UPF0215 protein MTH_1316 (204 aa).

It belongs to the UPF0215 family.

The protein is UPF0215 protein MTH_1316 of Methanothermobacter thermautotrophicus (strain ATCC 29096 / DSM 1053 / JCM 10044 / NBRC 100330 / Delta H) (Methanobacterium thermoautotrophicum).